Here is a 154-residue protein sequence, read N- to C-terminus: UPF0547 protein C16orf87 homolog (154 aa).

Residues 43 to 119 (NAKHSEKSPP…KHEEEREKQE (77 aa)) form a disordered region. Residues 68–84 (VRREKINSTVNKDLENR) are compositionally biased toward basic and acidic residues. The residue at position 91 (Ser-91) is a Phosphoserine. The stretch at 104–132 (KSSSAKKHEEEREKQEKEIDIYANLSDEK) forms a coiled coil. Positions 109-119 (KKHEEEREKQE) are enriched in basic and acidic residues.

It belongs to the UPF0547 family.

The chain is UPF0547 protein C16orf87 homolog from Mus musculus (Mouse).